We begin with the raw amino-acid sequence, 485 residues long: NADH-quinone oxidoreductase subunit N (485 aa).

A run of 14 helical transmembrane segments spans residues leucine 8–isoleucine 28, phenylalanine 35–valine 55, leucine 75–leucine 95, glutamate 104–histidine 124, leucine 125–tyrosine 145, tyrosine 159–alanine 179, isoleucine 203–phenylalanine 223, proline 235–isoleucine 255, threonine 271–glutamine 291, leucine 297–glutamine 317, valine 326–leucine 346, leucine 383–valine 403, glutamate 406–leucine 426, and methionine 455–isoleucine 475.

Belongs to the complex I subunit 2 family. NDH-1 is composed of 13 different subunits. Subunits NuoA, H, J, K, L, M, N constitute the membrane sector of the complex.

It is found in the cell inner membrane. The catalysed reaction is a quinone + NADH + 5 H(+)(in) = a quinol + NAD(+) + 4 H(+)(out). NDH-1 shuttles electrons from NADH, via FMN and iron-sulfur (Fe-S) centers, to quinones in the respiratory chain. The immediate electron acceptor for the enzyme in this species is believed to be ubiquinone. Couples the redox reaction to proton translocation (for every two electrons transferred, four hydrogen ions are translocated across the cytoplasmic membrane), and thus conserves the redox energy in a proton gradient. The sequence is that of NADH-quinone oxidoreductase subunit N from Photorhabdus laumondii subsp. laumondii (strain DSM 15139 / CIP 105565 / TT01) (Photorhabdus luminescens subsp. laumondii).